A 145-amino-acid polypeptide reads, in one-letter code: uncharacterized protein (145 aa).

This is an uncharacterized protein from Frog virus 3 (isolate Goorha) (FV-3).